The chain runs to 49 residues: RTCQSQSHKFKGACFSDTNCDSVCRTENFPRGQCNQHHVERKCYCERDC.

Intrachain disulfides connect Cys3–Cys49, Cys14–Cys34, Cys20–Cys43, and Cys24–Cys45.

In terms of biological role, has weak antifungal activity against F.graminearum and F.verticillioides below 30 ug/ml, but not against A.consortiale B.cinerea, H.sativum, F.culmorum, C.graminicola and D.maydis. This is Defensin Tk-AMP-D1 from Triticum kiharae (Wheat).